Reading from the N-terminus, the 888-residue chain is MNEKKDYKDTLNMPQTNFEMQAGLTRKEAQFRQRWLDNKLYHKILAKNKNNKQFVVHDGPPYANGSIHIGHALNKILKDIVVRFKSLQGFYSPFVPGWDTHGLPIENKMLSELKVNHKQIEVVKLRKEAAKYALNQMLIQKEQFLKLQMLSDFEEIYLTLDKNFEAKQLKLFKKMFFDGLIYKGLKPVYWSPSSMSALAEAEVEYYDHVSPSIYTCFTITKGNEFVEVDDELLIWTTTPWTLIANSGVAVGLDIEYSKVKFNKKNYIVASDLLEKVMEIFGVQKYKVVDTFKGKNLLGVEYQRPIKTDLFGIVVAGYHVSIDAGTGLVHMAPLFGEDDFIIGQENELDQIMHINDDGSINSEGDEFQGLFYSSANIKIKEFLEKNDKVMFFEYFTHSYPHDWRTKKPIIFRGTPQWFVSIDKIKPAILKEIEKIEGRPSWAVKRLATMIENRKTWTISRQRSWGVPIPIFYNEKNEIVNDEKVFDHVIELVEKYGSDVWFEKSVDELLPSEYKNKNWTKETNIMDVWFDSGSTSIGVEIEGVSVPFDLYLEGIDQYRGWFNSSIINSVAYWGQSPYRLLLSHGFVLDGKGKKMSKQLGNVVDPQEIIQKYGADILRLWVANCEYAHDVSVSESIIKQTVENYRKIRNTIKFLLGNLQDYDHSKFNLKLEGIHELINERLKKVKFDILQAYNDYDFNDVIKTLTNFLTDLSSFYLSISKDSLYADKINSKERRMIQYNMYNILEATLVVIAPIMPTTAEDAYDNFNKQDKQESVHLEKMFEATIADDKLEKTWKEFFDLKDEVYKEIEVEIANKKIKRTNDAHVTINTKSNFLMSLDLKKLLMIGKISFGSSLRVETFDSHKCPRCWNHIEKTEVVEDLCQRCYQTINS.

The 'HIGH' region motif lies at 61–71; that stretch reads PYANGSIHIGH. Residue E551 coordinates L-isoleucyl-5'-AMP. Positions 592–596 match the 'KMSKS' region motif; it reads KMSKQ. ATP is bound at residue K595. Zn(2+) contacts are provided by C862, C865, C879, and C882.

It belongs to the class-I aminoacyl-tRNA synthetase family. IleS type 1 subfamily. Monomer. Requires Zn(2+) as cofactor.

It localises to the cytoplasm. The catalysed reaction is tRNA(Ile) + L-isoleucine + ATP = L-isoleucyl-tRNA(Ile) + AMP + diphosphate. Functionally, catalyzes the attachment of isoleucine to tRNA(Ile). As IleRS can inadvertently accommodate and process structurally similar amino acids such as valine, to avoid such errors it has two additional distinct tRNA(Ile)-dependent editing activities. One activity is designated as 'pretransfer' editing and involves the hydrolysis of activated Val-AMP. The other activity is designated 'posttransfer' editing and involves deacylation of mischarged Val-tRNA(Ile). This Mycoplasmopsis pulmonis (strain UAB CTIP) (Mycoplasma pulmonis) protein is Isoleucine--tRNA ligase.